The chain runs to 243 residues: 1-(5-phosphoribosyl)-5-[(5-phosphoribosylamino)methylideneamino] imidazole-4-carboxamide isomerase (243 aa).

Asp-8 serves as the catalytic Proton acceptor. Asp-130 serves as the catalytic Proton donor.

It belongs to the HisA/HisF family.

It is found in the cytoplasm. The enzyme catalyses 1-(5-phospho-beta-D-ribosyl)-5-[(5-phospho-beta-D-ribosylamino)methylideneamino]imidazole-4-carboxamide = 5-[(5-phospho-1-deoxy-D-ribulos-1-ylimino)methylamino]-1-(5-phospho-beta-D-ribosyl)imidazole-4-carboxamide. The protein operates within amino-acid biosynthesis; L-histidine biosynthesis; L-histidine from 5-phospho-alpha-D-ribose 1-diphosphate: step 4/9. The sequence is that of 1-(5-phosphoribosyl)-5-[(5-phosphoribosylamino)methylideneamino] imidazole-4-carboxamide isomerase from Cellvibrio japonicus (strain Ueda107) (Pseudomonas fluorescens subsp. cellulosa).